The chain runs to 525 residues: Bifunctional purine biosynthesis protein PurH (525 aa).

Residues 1-148 enclose the MGS-like domain; sequence MPSNNLIKNA…KNYKNVIVIV (148 aa).

The protein belongs to the PurH family.

It catalyses the reaction (6R)-10-formyltetrahydrofolate + 5-amino-1-(5-phospho-beta-D-ribosyl)imidazole-4-carboxamide = 5-formamido-1-(5-phospho-D-ribosyl)imidazole-4-carboxamide + (6S)-5,6,7,8-tetrahydrofolate. The catalysed reaction is IMP + H2O = 5-formamido-1-(5-phospho-D-ribosyl)imidazole-4-carboxamide. Its pathway is purine metabolism; IMP biosynthesis via de novo pathway; 5-formamido-1-(5-phospho-D-ribosyl)imidazole-4-carboxamide from 5-amino-1-(5-phospho-D-ribosyl)imidazole-4-carboxamide (10-formyl THF route): step 1/1. It participates in purine metabolism; IMP biosynthesis via de novo pathway; IMP from 5-formamido-1-(5-phospho-D-ribosyl)imidazole-4-carboxamide: step 1/1. This is Bifunctional purine biosynthesis protein PurH from Buchnera aphidicola subsp. Acyrthosiphon pisum (strain APS) (Acyrthosiphon pisum symbiotic bacterium).